The following is a 482-amino-acid chain: Tripartite motif-containing protein 10 (482 aa).

An RING-type zinc finger spans residues 16–61; it reads CPICQGTLREPVTIDCGHNFCCVCLTRYLEIPCLDPGELPTCPLCK. The B box-type zinc finger occupies 95 to 136; the sequence is EEEDVCLEHREKVYYFCEDDEMQLCVVCREAWEHRHHTVRFL. Cys-100, His-103, Cys-122, and His-128 together coordinate Zn(2+). In terms of domain architecture, B30.2/SPRY spans 293–482; sequence REMKTFLEKL…GRGSKFSLSS (190 aa).

Belongs to the TRIM/RBCC family. As to quaternary structure, interacts with IFNAR1; this interaction prevents association of IFNAR1 with TYK2.

It is found in the cytoplasm. In terms of biological role, E3 ligase that plays an essential role in the differentiation and survival of terminal erythroid cells. May directly bind to PTEN and promote its ubiquitination, resulting in its proteasomal degradation and activation of hypertrophic signaling. In addition, plays a role in immune response regulation by repressing the phosphorylation of STAT1 and STAT2 in the interferon/JAK/STAT signaling pathway independent of its E3 ligase activity. Mechanistically, interacts with the intracellular domain of IFNAR1 and thereby inhibits the association of TYK2 and IFNAR1. This is Tripartite motif-containing protein 10 (TRIM10) from Sus scrofa (Pig).